A 523-amino-acid chain; its full sequence is FAD-dependent monooxygenase drtC (523 aa).

Positions 77 to 252 (TSLNSACIVL…TNFEVRAFPQ (176 aa)) constitute an FAD-binding PCMH-type domain.

It belongs to the oxygen-dependent FAD-linked oxidoreductase family. FAD is required as a cofactor.

It participates in secondary metabolite biosynthesis; terpenoid biosynthesis. In terms of biological role, FAD-dependent monooxygenase; part of the gene cluster that mediates the biosynthesis of various drimane-type sesquiterpene esters, compounds that exhibit diverse biological activities and are widely present in eukaryotes. The pathway begins with the synthesis of the backbone drimenol by the terpene cyclase drtB using farnesyl pyrophosphate (FPP) as substrate. The cytochrome P450 monooxygenase drtD is then responsible for the hydroxylations at C-6, C-9 and C-12, as well as the oxidation of hydroxyl groups at C-6 and C-11 to a ketone and an aldehyde, respectively. Then, the biosynthesis can go in two directions, either the hydroxylated drimenol is further hydroxylated at C-2 and C-3 by an enzyme(s) not associated with the drt cluster, or the FAD-binding oxidoreductase drtC further oxidizes C-11 or C-12 to form the butyrolactone ring. DrtB, drtD and drtC are solely responsible for the formation of the different drimane structures observed during drimane sesquiterpenes biosynthesis. The polyketide synthase drtA synthesizes different lengths (C6 and C8) of PKS chains, which are then oxidized to varying degrees by the short-chain dehydrogenase drtF. Finally, these PKS chains are transferred onto drimane sesquiterpenes by the acyltransferase drtE, forming the sesquiterpene esters. In addition to the different fatty acyl-CoA chains produced by drtA, drtE is also able to use cinnamoyl-CoA as a substrate. The polypeptide is FAD-dependent monooxygenase drtC (Aspergillus calidoustus).